Consider the following 351-residue polypeptide: Prostaglandin reductase 2 (351 aa).

99-100 (FY) provides a ligand contact to substrate. NADP(+) contacts are provided by residues 165–168 (GACG), Lys-192, Tyr-208, Asn-231, 253–259 (CGQISQY), 287–289 (FLV), and Asn-337. 288–290 (LVL) contacts substrate.

It belongs to the NADP-dependent oxidoreductase L4BD family. Monomer.

The protein localises to the cytoplasm. The catalysed reaction is 13,14-dihydro-15-oxo-prostaglandin E2 + NAD(+) = 15-oxoprostaglandin E2 + NADH + H(+). The enzyme catalyses 13,14-dihydro-15-oxo-prostaglandin E2 + NADP(+) = 15-oxoprostaglandin E2 + NADPH + H(+). It carries out the reaction 13,14-dihydro-15-oxo-PGF2alpha + NADP(+) = 15-oxoprostaglandin F2alpha + NADPH + H(+). It catalyses the reaction 13,14-dihydro-15-oxo-prostaglandin E1 + NADP(+) = 15-oxoprostaglandin E1 + NADPH + H(+). The catalysed reaction is 13,14-dihydro-15-oxo-prostaglandin F1alpha + NADP(+) = 15-oxoprostaglandin F1alpha + NADPH + H(+). Functions as 15-oxo-prostaglandin 13-reductase and acts on 15-keto-PGE1, 15-keto-PGE2, 15-keto-PGE1-alpha and 15-keto-PGE2-alpha with highest activity towards 15-keto-PGE2. Overexpression represses transcriptional activity of PPARG and inhibits adipocyte differentiation. This Pongo abelii (Sumatran orangutan) protein is Prostaglandin reductase 2 (PTGR2).